The chain runs to 368 residues: tRNA 2-selenouridine synthase (368 aa).

Positions 15-138 constitute a Rhodanese domain; the sequence is FLNQHPIMDV…LRQYLIGVIE (124 aa). The active-site S-selanylcysteine intermediate is the cysteine 98.

It belongs to the SelU family. In terms of assembly, monomer.

It carries out the reaction 5-methylaminomethyl-2-thiouridine(34) in tRNA + selenophosphate + (2E)-geranyl diphosphate + H2O + H(+) = 5-methylaminomethyl-2-selenouridine(34) in tRNA + (2E)-thiogeraniol + phosphate + diphosphate. The enzyme catalyses 5-methylaminomethyl-2-thiouridine(34) in tRNA + (2E)-geranyl diphosphate = 5-methylaminomethyl-S-(2E)-geranyl-thiouridine(34) in tRNA + diphosphate. It catalyses the reaction 5-methylaminomethyl-S-(2E)-geranyl-thiouridine(34) in tRNA + selenophosphate + H(+) = 5-methylaminomethyl-2-(Se-phospho)selenouridine(34) in tRNA + (2E)-thiogeraniol. The catalysed reaction is 5-methylaminomethyl-2-(Se-phospho)selenouridine(34) in tRNA + H2O = 5-methylaminomethyl-2-selenouridine(34) in tRNA + phosphate. Its function is as follows. Involved in the post-transcriptional modification of the uridine at the wobble position (U34) of tRNA(Lys), tRNA(Glu) and tRNA(Gln). Catalyzes the conversion of 2-thiouridine (S2U-RNA) to 2-selenouridine (Se2U-RNA). Acts in a two-step process involving geranylation of 2-thiouridine (S2U) to S-geranyl-2-thiouridine (geS2U) and subsequent selenation of the latter derivative to 2-selenouridine (Se2U) in the tRNA chain. This is tRNA 2-selenouridine synthase from Shewanella baltica (strain OS223).